Consider the following 62-residue polypeptide: Photosystem II reaction center protein Z (62 aa).

Helical transmembrane passes span 8 to 28 and 41 to 61; these read ALLL…VLYA and LVGG…NYFV.

Belongs to the PsbZ family. In terms of assembly, PSII is composed of 1 copy each of membrane proteins PsbA, PsbB, PsbC, PsbD, PsbE, PsbF, PsbH, PsbI, PsbJ, PsbK, PsbL, PsbM, PsbT, PsbX, PsbY, PsbZ, Psb30/Ycf12, peripheral proteins PsbO, CyanoQ (PsbQ), PsbU, PsbV and a large number of cofactors. It forms dimeric complexes.

It is found in the cellular thylakoid membrane. May control the interaction of photosystem II (PSII) cores with the light-harvesting antenna, regulates electron flow through the 2 photosystem reaction centers. PSII is a light-driven water plastoquinone oxidoreductase, using light energy to abstract electrons from H(2)O, generating a proton gradient subsequently used for ATP formation. In Synechococcus elongatus (strain ATCC 33912 / PCC 7942 / FACHB-805) (Anacystis nidulans R2), this protein is Photosystem II reaction center protein Z.